The chain runs to 211 residues: Redox-sensing transcriptional repressor Rex (211 aa).

The H-T-H motif DNA-binding region spans 18–57; it reads LYYRFLKNLHASGKQRVSSAELSEAVKVDSATIRRDFSYF. 92–97 is an NAD(+) binding site; it reads GVGNLG.

Belongs to the transcriptional regulatory Rex family. Homodimer.

It is found in the cytoplasm. In terms of biological role, modulates transcription in response to changes in cellular NADH/NAD(+) redox state. This chain is Redox-sensing transcriptional repressor Rex, found in Anoxybacillus flavithermus (strain DSM 21510 / WK1).